A 760-amino-acid chain; its full sequence is Phosphatidylinositol N-acetylglucosaminyltransferase subunit Q (760 aa).

The next 5 helical transmembrane spans lie at 278–298 (TVASVLLDVALGLMLLSWLHG), 349–371 (LYHIHLWISYIHLMSPFVEHILW), 378–400 (CLGLTVALSLLSDIIALLTFHIY), 446–468 (LFIGTLLFTILLFLLPTTALYYL), and 475–497 (LLVVAVQGLIHLLVDLINSLPLY). The segment at 696–748 (LAVGVEGPCQDEPPSPRHPLAPSAEQHPASGGLKQSLTPVPSGPGPSLPEPHG) is disordered.

The protein belongs to the PIGQ family. In terms of assembly, component of the glycosylphosphatidylinositol-N-acetylglucosaminyltransferase (GPI-GnT) complex composed at least by PIGA, PIGC, PIGH, PIGP, PIGQ, PIGY and DPM2. Interacts with PIGA, PIGH and PIGC.

It localises to the membrane. The protein operates within glycolipid biosynthesis; glycosylphosphatidylinositol-anchor biosynthesis. In terms of biological role, part of the glycosylphosphatidylinositol-N-acetylglucosaminyltransferase (GPI-GnT) complex that catalyzes the transfer of N-acetylglucosamine from UDP-N-acetylglucosamine to phosphatidylinositol and participates in the first step of GPI biosynthesis. The chain is Phosphatidylinositol N-acetylglucosaminyltransferase subunit Q from Homo sapiens (Human).